We begin with the raw amino-acid sequence, 133 residues long: Large ribosomal subunit protein bL17 (133 aa).

This sequence belongs to the bacterial ribosomal protein bL17 family. In terms of assembly, part of the 50S ribosomal subunit. Contacts protein L32.

The protein is Large ribosomal subunit protein bL17 of Idiomarina loihiensis (strain ATCC BAA-735 / DSM 15497 / L2-TR).